A 160-amino-acid chain; its full sequence is Lipoprotein signal peptidase (160 aa).

The next 2 helical transmembrane spans lie at 59 to 79 (PEGI…YVWI) and 84 to 104 (SPLF…NLID). Active-site residues include Asp113 and Asp139. Residues 132 to 152 (WPIFNIADACITIGACLLFFF) form a helical membrane-spanning segment.

Belongs to the peptidase A8 family.

The protein localises to the cell inner membrane. It catalyses the reaction Release of signal peptides from bacterial membrane prolipoproteins. Hydrolyzes -Xaa-Yaa-Zaa-|-(S,diacylglyceryl)Cys-, in which Xaa is hydrophobic (preferably Leu), and Yaa (Ala or Ser) and Zaa (Gly or Ala) have small, neutral side chains.. The protein operates within protein modification; lipoprotein biosynthesis (signal peptide cleavage). Functionally, this protein specifically catalyzes the removal of signal peptides from prolipoproteins. The chain is Lipoprotein signal peptidase from Chlorobaculum parvum (strain DSM 263 / NCIMB 8327) (Chlorobium vibrioforme subsp. thiosulfatophilum).